The following is a 402-amino-acid chain: Type II NADH:quinone oxidoreductase (402 aa).

FAD contacts are provided by residues 12 to 16, 39 to 40, and Val-83; these read GAGYA and NK. Glu-172 is a catalytic residue. FAD contacts are provided by residues Asp-302, 319-320, and Lys-379; that span reads AQ.

This sequence belongs to the NADH dehydrogenase family. FAD is required as a cofactor.

The protein localises to the cell membrane. The catalysed reaction is a quinone + NADH + H(+) = a quinol + NAD(+). In terms of biological role, alternative, nonproton pumping NADH:quinone oxidoreductase that delivers electrons to the respiratory chain by oxidation of NADH and reduction of quinones, and contributes to the regeneration of NAD(+). This chain is Type II NADH:quinone oxidoreductase, found in Staphylococcus epidermidis (strain ATCC 12228 / FDA PCI 1200).